The chain runs to 276 residues: MEQLIRDEMRVLPTIDPHFEIERRVAFIKKKLVESGCKSLVLGISGGVDSTTCGRLAQVAVDQLNQESNSNDYQFVAVRLPYGEQKDEEEAQLALSFIQPTHSVSVNIKAGVDGLHAASHIALEGTGLIPQDAAKVDFVKGNVKARARMVAQYEIAGYVGGLVLGTDHSAENITGFYTKFGDGACDLAPLFGLSKRQVRLVAETLGAPELLVKKVPTADLEELAPQKADEDALNLTYEQIDDFLEGKPVSEAVSARLVSIYKATQHKRQPIPTIYD.

43–50 (GISGGVDS) lines the ATP pocket. Residue D49 coordinates Mg(2+). R146 is a binding site for deamido-NAD(+). Position 166 (T166) interacts with ATP. Residue E171 coordinates Mg(2+). K179 and D186 together coordinate deamido-NAD(+). Residues K195 and T217 each coordinate ATP. 266–267 (HK) serves as a coordination point for deamido-NAD(+).

This sequence belongs to the NAD synthetase family. As to quaternary structure, homodimer.

It catalyses the reaction deamido-NAD(+) + NH4(+) + ATP = AMP + diphosphate + NAD(+) + H(+). It functions in the pathway cofactor biosynthesis; NAD(+) biosynthesis; NAD(+) from deamido-NAD(+) (ammonia route): step 1/1. Functionally, catalyzes the ATP-dependent amidation of deamido-NAD to form NAD. Uses ammonia as a nitrogen source. The sequence is that of NH(3)-dependent NAD(+) synthetase from Vibrio vulnificus (strain CMCP6).